Here is a 349-residue protein sequence, read N- to C-terminus: Phosphoribosylformylglycinamidine cyclo-ligase (349 aa).

Belongs to the AIR synthase family.

The protein resides in the cytoplasm. The catalysed reaction is 2-formamido-N(1)-(5-O-phospho-beta-D-ribosyl)acetamidine + ATP = 5-amino-1-(5-phospho-beta-D-ribosyl)imidazole + ADP + phosphate + H(+). It participates in purine metabolism; IMP biosynthesis via de novo pathway; 5-amino-1-(5-phospho-D-ribosyl)imidazole from N(2)-formyl-N(1)-(5-phospho-D-ribosyl)glycinamide: step 2/2. The chain is Phosphoribosylformylglycinamidine cyclo-ligase from Lactobacillus helveticus (strain DPC 4571).